Consider the following 219-residue polypeptide: Dephospho-CoA kinase (219 aa).

The region spanning 8–215 (LVGVTGGIGS…EAAASGPDCQ (208 aa)) is the DPCK domain. 16-21 (GSGKST) contributes to the ATP binding site.

This sequence belongs to the CoaE family.

The protein resides in the cytoplasm. It catalyses the reaction 3'-dephospho-CoA + ATP = ADP + CoA + H(+). The protein operates within cofactor biosynthesis; coenzyme A biosynthesis; CoA from (R)-pantothenate: step 5/5. Its function is as follows. Catalyzes the phosphorylation of the 3'-hydroxyl group of dephosphocoenzyme A to form coenzyme A. The chain is Dephospho-CoA kinase from Chlorobium luteolum (strain DSM 273 / BCRC 81028 / 2530) (Pelodictyon luteolum).